The following is a 344-amino-acid chain: N-acetyl-gamma-glutamyl-phosphate reductase (344 aa).

Cys149 is a catalytic residue.

Belongs to the NAGSA dehydrogenase family. Type 1 subfamily.

It is found in the cytoplasm. The catalysed reaction is N-acetyl-L-glutamate 5-semialdehyde + phosphate + NADP(+) = N-acetyl-L-glutamyl 5-phosphate + NADPH + H(+). It functions in the pathway amino-acid biosynthesis; L-arginine biosynthesis; N(2)-acetyl-L-ornithine from L-glutamate: step 3/4. Catalyzes the NADPH-dependent reduction of N-acetyl-5-glutamyl phosphate to yield N-acetyl-L-glutamate 5-semialdehyde. This chain is N-acetyl-gamma-glutamyl-phosphate reductase, found in Thermoanaerobacter pseudethanolicus (strain ATCC 33223 / 39E) (Clostridium thermohydrosulfuricum).